The chain runs to 180 residues: Putative manganese efflux pump MntP (180 aa).

Transmembrane regions (helical) follow at residues 6 to 26 (VLLLAGALGTDAFSLCLGLGL), 33 to 53 (MAWMLVGLIVALHVVLPVAGW), 63 to 83 (VGRWAAYLGAAILFYLGVKMV), 101 to 121 (GFLGLTVLAGSVSMDALSVGF), and 130 to 150 (LLLTAGVIGLVAGLMSAAAFV).

The protein belongs to the MntP (TC 9.B.29) family.

The protein resides in the cell membrane. Its function is as follows. Probably functions as a manganese efflux pump. This is Putative manganese efflux pump MntP from Desulforudis audaxviator (strain MP104C).